We begin with the raw amino-acid sequence, 400 residues long: Subtilisin-like protease 7 (400 aa).

An N-terminal signal peptide occupies residues 1–20 (MGFITKAIPLALAAMSVVNG). Positions 21–119 (AEILETRAGV…IERDARVQIN (99 aa)) are excised as a propeptide. The Inhibitor I9 domain maps to 36-118 (KYIVIMNDGV…YIERDARVQI (83 aa)). Residues 129 to 400 (SWGLARVGSR…GKLINNGSGK (272 aa)) enclose the Peptidase S8 domain. Active-site charge relay system residues include Asp161 and His192. N-linked (GlcNAc...) asparagine glycosylation is found at Asn222 and Asn252. Ser346 serves as the catalytic Charge relay system. Residue Asn396 is glycosylated (N-linked (GlcNAc...) asparagine).

Belongs to the peptidase S8 family.

The protein resides in the secreted. Functionally, secreted subtilisin-like serine protease with keratinolytic activity that contributes to pathogenicity. This chain is Subtilisin-like protease 7 (SUB7), found in Arthroderma otae (strain ATCC MYA-4605 / CBS 113480) (Microsporum canis).